The primary structure comprises 146 residues: Hemoglobin subunit beta (146 aa).

Position 1 is an N-acetylvaline (V1). A Globin domain is found at 2–146; that stretch reads HLTAEEKSLV…VANALAHKYH (145 aa). T12 is subject to Phosphothreonine. A Phosphoserine modification is found at S44. An N6-acetyllysine modification is found at K59. Heme b is bound at residue H63. K82 is subject to N6-acetyllysine. Position 92 (H92) interacts with heme b. C93 carries the S-nitrosocysteine modification. K144 bears the N6-acetyllysine mark.

Belongs to the globin family. As to quaternary structure, heterotetramer of two alpha chains and two beta chains. In terms of tissue distribution, red blood cells.

Functionally, involved in oxygen transport from the lung to the various peripheral tissues. In Vulpes vulpes (Red fox), this protein is Hemoglobin subunit beta (HBB).